We begin with the raw amino-acid sequence, 477 residues long: MRLLKSHPLLKLVNSYLIDASQPSNISYLWNFGSLLACCLIIQIVTGVTLAMHYSPNVLEAFNSIEHIMRDVNNGWLVRYLHSNTASAFFFLVYLHIGRGMYYGSYRAPRTLVWAIGTVILILMMATAFLGYVLPYGQMSLWGATVITNLISAIPWIGQDIVESKIITLIINLSFIAILFSIVVVYYYILLHVNFSSNLPTIGVIHQNALKKSNKALRLDKQEYISIPSSFLAFLAGLVDGDGYIQVTKTSKGFIAIKLVISLHLEDLSILEYIHSVLKIGKINIYKDLRSPTCKLVINKTDLQEILFPLLMYNKIFFLTNTRADQFNLAMYIFKNDIKMYNQIPDNTPAVFEIPKNPIDYTLLPFFKNWIVGFTCSEGSFFIKSNNDGCFQLKQRIHTNLFEAFKLMFNTNRKIDTTNNFNQFGVSSKSDIQKVINFFSFSGLHPLVGLKYIQYIKWLNNLRESLRYSTLNYPDAK.

The tract at residues 1 to 163 is cytochrome b; that stretch reads MRLLKSHPLL…IPWIGQDIVE (163 aa). 5 consecutive transmembrane segments (helical) span residues 32–52, 86–106, 113–133, 142–162, and 166–186; these read FGSLLACCLIIQIVTGVTLAM, ASAFFFLVYLHIGRGMYYGSY, VWAIGTVILILMMATAFLGYV, WGATVITNLISAIPWIGQDIV, and IITLIINLSFIAILFSIVVVY. Positions 164–477 are maturase; it reads SKIITLIINL…YSTLNYPDAK (314 aa).

In the N-terminal section; belongs to the cytochrome b family. This sequence in the C-terminal section; belongs to the LAGLIDADG endonuclease family.

Its subcellular location is the mitochondrion inner membrane. Mitochondrial mRNA maturase required for splicing of intron 3 of the cytochrome b (cob) gene, containing its own coding sequence. The chain is Cytochrome b mRNA maturase bI3 (bI3) from Neurospora crassa (strain ATCC 24698 / 74-OR23-1A / CBS 708.71 / DSM 1257 / FGSC 987).